A 628-amino-acid polypeptide reads, in one-letter code: Growth hormone receptor (628 aa).

The N-terminal stretch at 1 to 18 is a signal peptide; the sequence is MDLWQLLLTLAVVGSSNA. The Extracellular portion of the chain corresponds to 19 to 266; sequence FVGREAVTVT…FTCEEEFQFP (248 aa). N-linked (GlcNAc...) asparagine glycosylation is found at Asn33, Asn40, and Asn46. Cystine bridges form between Cys56-Cys66 and Cys101-Cys112. Asn115 carries an N-linked (GlcNAc...) asparagine glycan. Cys126 and Cys140 are joined by a disulfide. Residues 151–254 enclose the Fibronectin type-III domain; sequence PPTGLNWTLM…EILYITLPQS (104 aa). 3 N-linked (GlcNAc...) asparagine glycosylation sites follow: Asn156, Asn161, and Asn200. The WSXWS motif signature appears at 240–244; the sequence is YGEFS. The chain crosses the membrane as a helical span at residues 267-287; the sequence is WFLIMIFGIFGLTVMLLVVMF. Over 288 to 628 the chain is Cytoplasmic; that stretch reads SKQQRIKMLI…STDQLNKIML (341 aa). Positions 294–379 are required for JAK2 binding; sequence KMLILPPVPV…HQKSLNILGA (86 aa). Positions 297–305 match the Box 1 motif motif; sequence ILPPVPVPK. The UbE motif motif lies at 340–349; sequence DSWVEFIELD. Phosphoserine is present on Ser341. Tyr483 and Tyr585 each carry phosphotyrosine.

Belongs to the type I cytokine receptor family. Type 1 subfamily. In terms of assembly, on growth hormone (GH) binding, forms homodimers and binds JAK2 via a box 1-containing domain. Post-translationally, the soluble form (GHBP) is produced by phorbol ester-promoted proteolytic cleavage at the cell surface (shedding) by ADAM17/TACE. Shedding is inhibited by growth hormone (GH) binding to the receptor probably due to a conformational change in GHR rendering the receptor inaccessible to ADAM17. On GH binding, phosphorylated on tyrosine residues in the cytoplasmic domain by JAK2. In terms of processing, ubiquitinated by the ECS(SOCS2) complex following ligand-binding and phosphorylation by JAK2, leading to its degradation by the proteasome. Regulation by the ECS(SOCS2) complex acts as a negative feedback loop of growth hormone receptor signaling. Ubiquitination is not sufficient for GHR internalization.

It is found in the cell membrane. The protein localises to the secreted. Its function is as follows. Receptor for pituitary gland growth hormone (GH1) involved in regulating postnatal body growth. On ligand binding, couples to the JAK2/STAT5 pathway. The soluble form (GHBP) acts as a reservoir of growth hormone in plasma and may be a modulator/inhibitor of GH signaling. In Cavia porcellus (Guinea pig), this protein is Growth hormone receptor (GHR).